The sequence spans 235 residues: Phosphoribosylaminoimidazole-succinocarboxamide synthase (235 aa).

Belongs to the SAICAR synthetase family.

It carries out the reaction 5-amino-1-(5-phospho-D-ribosyl)imidazole-4-carboxylate + L-aspartate + ATP = (2S)-2-[5-amino-1-(5-phospho-beta-D-ribosyl)imidazole-4-carboxamido]succinate + ADP + phosphate + 2 H(+). Its pathway is purine metabolism; IMP biosynthesis via de novo pathway; 5-amino-1-(5-phospho-D-ribosyl)imidazole-4-carboxamide from 5-amino-1-(5-phospho-D-ribosyl)imidazole-4-carboxylate: step 1/2. This chain is Phosphoribosylaminoimidazole-succinocarboxamide synthase, found in Chloroherpeton thalassium (strain ATCC 35110 / GB-78).